Reading from the N-terminus, the 507-residue chain is 3-oxosteroid 1-dehydrogenase (507 aa).

9 to 38 provides a ligand contact to FAD; sequence DLLVVGSGGGALTGAYTAAAQGLTTIVLEK. The disordered stretch occupies residues 299-385; the sequence is GLVVDSPGSV…LPRPDYRPER (87 aa).

It belongs to the FAD-dependent oxidoreductase 2 family. 3-oxosteroid dehydrogenase subfamily. The cofactor is FAD.

The protein resides in the cell membrane. The enzyme catalyses a 3-oxosteroid + A = a 3-oxo-Delta(1)-steroid + AH2. It participates in lipid metabolism; steroid degradation. Catalyzes the elimination of the C-1 and C-2 hydrogen atoms of the A-ring from the polycyclic ring structure of 3-ketosteroids. This is 3-oxosteroid 1-dehydrogenase from Rhodococcus opacus (Nocardia opaca).